The following is a 438-amino-acid chain: Xaa-Pro dipeptidase 2 (438 aa).

Mn(2+)-binding residues include D242, D253, H333, E378, and E414.

This sequence belongs to the peptidase M24B family. Bacterial-type prolidase subfamily. Mn(2+) serves as cofactor.

The enzyme catalyses Xaa-L-Pro dipeptide + H2O = an L-alpha-amino acid + L-proline. In terms of biological role, splits dipeptides with a prolyl residue in the C-terminal position. The protein is Xaa-Pro dipeptidase 2 of Idiomarina loihiensis (strain ATCC BAA-735 / DSM 15497 / L2-TR).